Consider the following 87-residue polypeptide: MANTAQARKRARQAVKQNAHNSSQRSTLRTAVKAVRKAIEAGDKTAAAQVFLASVSTIDRIADKKIIHKNKAARHKSRLAAALKALA.

Residues 1-29 (MANTAQARKRARQAVKQNAHNSSQRSTLR) are disordered. Polar residues predominate over residues 20–29 (HNSSQRSTLR).

It belongs to the bacterial ribosomal protein bS20 family.

Binds directly to 16S ribosomal RNA. In Herminiimonas arsenicoxydans, this protein is Small ribosomal subunit protein bS20.